The sequence spans 87 residues: Large ribosomal subunit protein eL20 (87 aa).

This sequence belongs to the eukaryotic ribosomal protein eL20 family. As to quaternary structure, part of the 50S ribosomal subunit. Binds 23S rRNA.

The polypeptide is Large ribosomal subunit protein eL20 (Hyperthermus butylicus (strain DSM 5456 / JCM 9403 / PLM1-5)).